A 390-amino-acid chain; its full sequence is Transforming growth factor beta-1 proprotein (390 aa).

The N-terminal stretch at 1–29 is a signal peptide; it reads MPPSGLRLLPLLLPLPWLLVLTPGRPAAG. The interval 30–74 is straightjacket domain; the sequence is LSTCKTIDMELVKRKRIEAIRGQILSKLRLASPPSQGEVPPGPLP. An arm domain region spans residues 75–271; the sequence is EAVLALYNST…ATPLERAQHL (197 aa). Residues N82, N136, and N176 are each glycosylated (N-linked (GlcNAc...) asparagine). The segment at 226–252 is bowtie tail; it reads DSKDNVLHVEINGISPKRRGDLGTIHD. A Cell attachment site motif is present at residues 244-246; it reads RGD. 4 disulfides stabilise this stretch: C285–C294, C293–C356, C322–C387, and C326–C389.

The protein belongs to the TGF-beta family. Homodimer; disulfide-linked. Interacts with the serine proteases, HTRA1 and HTRA3: the interaction with either inhibits TGFB1-mediated signaling and the HTRA protease activity is required for this inhibition. May interact with THSD4; this interaction may lead to sequestration by FBN1 microfibril assembly and attenuation of TGFB signaling. Interacts with CD109, DPT and ASPN. Interacts with EFEMP2. Interacts with TSKU; the interaction contributes to regulation of the hair cycle. Interacts with TGFBR3. As to quaternary structure, homodimer; disulfide-linked. Interacts with transforming growth factor beta-1 (TGF-beta-1) chain; interaction is non-covalent and maintains TGF-beta-1 in a latent state; each latency-associated peptide (LAP) monomer interacts with TGF-beta-1 in the other monomer. Interacts with LTBP1; leading to regulation of TGF-beta-1 activation. Interacts with LRRC32/GARP; leading to regulation of TGF-beta-1 activation on the surface of activated regulatory T-cells (Tregs). Interacts with LRRC33/NRROS; leading to regulation of TGF-beta-1 activation in macrophages and microglia. Interacts (via cell attachment site) with integrins ITGAV and ITGB6 (ITGAV:ITGB6), leading to release of the active TGF-beta-1. Interacts with NREP; the interaction results in a decrease in TGFB1 autoinduction. Interacts with HSP90AB1; inhibits latent TGFB1 activation. In terms of assembly, homodimer; disulfide-linked. Interacts with TGF-beta receptors (TGFBR1 and TGFBR2), leading to signal transduction. Transforming growth factor beta-1 proprotein: The precursor proprotein is cleaved in the Golgi apparatus by FURIN to form Transforming growth factor beta-1 (TGF-beta-1) and Latency-associated peptide (LAP) chains, which remain non-covalently linked, rendering TGF-beta-1 inactive. In terms of processing, N-glycosylated. Deglycosylation leads to activation of Transforming growth factor beta-1 (TGF-beta-1); mechanisms triggering deglycosylation-driven activation of TGF-beta-1 are however unclear. As to expression, abundant in the bone matrix. Expressed in cardiomyocytes.

It localises to the secreted. The protein resides in the extracellular space. It is found in the extracellular matrix. Its function is as follows. Transforming growth factor beta-1 proprotein: Precursor of the Latency-associated peptide (LAP) and Transforming growth factor beta-1 (TGF-beta-1) chains, which constitute the regulatory and active subunit of TGF-beta-1, respectively. In terms of biological role, required to maintain the Transforming growth factor beta-1 (TGF-beta-1) chain in a latent state during storage in extracellular matrix. Associates non-covalently with TGF-beta-1 and regulates its activation via interaction with 'milieu molecules', such as LTBP1, LRRC32/GARP and LRRC33/NRROS, that control activation of TGF-beta-1. Interaction with LRRC33/NRROS regulates activation of TGF-beta-1 in macrophages and microglia. Interaction with LRRC32/GARP controls activation of TGF-beta-1 on the surface of activated regulatory T-cells (Tregs). Interaction with integrins (ITGAV:ITGB6 or ITGAV:ITGB8) results in distortion of the Latency-associated peptide chain and subsequent release of the active TGF-beta-1. Multifunctional protein that regulates the growth and differentiation of various cell types and is involved in various processes, such as normal development, immune function, microglia function and responses to neurodegeneration. Activation into mature form follows different steps: following cleavage of the proprotein in the Golgi apparatus, Latency-associated peptide (LAP) and Transforming growth factor beta-1 (TGF-beta-1) chains remain non-covalently linked rendering TGF-beta-1 inactive during storage in extracellular matrix. At the same time, LAP chain interacts with 'milieu molecules', such as LTBP1, LRRC32/GARP and LRRC33/NRROS that control activation of TGF-beta-1 and maintain it in a latent state during storage in extracellular milieus. TGF-beta-1 is released from LAP by integrins (ITGAV:ITGB6 or ITGAV:ITGB8): integrin-binding to LAP stabilizes an alternative conformation of the LAP bowtie tail and results in distortion of the LAP chain and subsequent release of the active TGF-beta-1. Once activated following release of LAP, TGF-beta-1 acts by binding to TGF-beta receptors (TGFBR1 and TGFBR2), which transduce signal. While expressed by many cells types, TGF-beta-1 only has a very localized range of action within cell environment thanks to fine regulation of its activation by Latency-associated peptide chain (LAP) and 'milieu molecules'. Plays an important role in bone remodeling: acts as a potent stimulator of osteoblastic bone formation, causing chemotaxis, proliferation and differentiation in committed osteoblasts. Can promote either T-helper 17 cells (Th17) or regulatory T-cells (Treg) lineage differentiation in a concentration-dependent manner. At high concentrations, leads to FOXP3-mediated suppression of RORC and down-regulation of IL-17 expression, favoring Treg cell development. At low concentrations in concert with IL-6 and IL-21, leads to expression of the IL-17 and IL-23 receptors, favoring differentiation to Th17 cells. Stimulates sustained production of collagen through the activation of CREB3L1 by regulated intramembrane proteolysis (RIP). Mediates SMAD2/3 activation by inducing its phosphorylation and subsequent translocation to the nucleus. Positively regulates odontoblastic differentiation in dental papilla cells, via promotion of IPO7-mediated translocation of phosphorylated SMAD2 to the nucleus and subsequent transcription of target genes. Can induce epithelial-to-mesenchymal transition (EMT) and cell migration in various cell types. The protein is Transforming growth factor beta-1 proprotein (Tgfb1) of Rattus norvegicus (Rat).